The primary structure comprises 135 residues: C-type natriuretic peptide (135 aa).

The N-terminal stretch at 1-25 is a signal peptide; that stretch reads MSGHTSFYCGLLLLLLIQVQARPRA. The propeptide occupies 26 to 113; that stretch reads DDSLQVLSRL…PLRFKGRSKK (88 aa). Residues 46-67 form a disordered region; the sequence is EELNNEAQEISPAASLPDLNTD. Cysteine 119 and cysteine 135 form a disulfide bridge.

It belongs to the natriuretic peptide family.

It is found in the secreted. In terms of biological role, hormone which may be vasoactive and natriuretic. Has a cGMP-stimulating activity. In Squalus acanthias (Spiny dogfish), this protein is C-type natriuretic peptide.